The following is a 103-amino-acid chain: MLKPSIDTLLDKVPSKYSLVILQAKRAHELEAGEKATQDFKSVKSTLRALEEIESGNVVIHPDPSAKRASVRARIEAERLAKEEEERKIKEQIAKEKEDGEKI.

It belongs to the RNA polymerase subunit omega family. The RNAP catalytic core consists of 2 alpha, 1 beta, 1 beta' and 1 omega subunit. When a sigma factor is associated with the core the holoenzyme is formed, which can initiate transcription.

The enzyme catalyses RNA(n) + a ribonucleoside 5'-triphosphate = RNA(n+1) + diphosphate. In terms of biological role, promotes RNA polymerase assembly. Latches the N- and C-terminal regions of the beta' subunit thereby facilitating its interaction with the beta and alpha subunits. This Streptococcus agalactiae serotype III (strain NEM316) protein is DNA-directed RNA polymerase subunit omega.